The sequence spans 229 residues: Auxin-responsive protein IAA17 (229 aa).

The EAR-like (transcriptional repression) signature appears at 14–18 (LCLGL). A PB1 domain is found at 110 to 211 (AAFVKVSMDG…TCKRLRLMKG (102 aa)).

It belongs to the Aux/IAA family. As to quaternary structure, homodimers and heterodimers. Interacts with the auxin response factors ARF1 and IAA24. Interacts with IAA1. Interacts with TPL. Interacts (via PB1 domain) with ARF7 (via PB1 domain). Post-translationally, phosphorylated by phytochrome A in vitro.

It localises to the nucleus. Functionally, aux/IAA proteins are short-lived transcriptional factors that function as repressors of early auxin response genes at low auxin concentrations. Repression is thought to result from the interaction with auxin response factors (ARFs), proteins that bind to the auxin-responsive promoter element (AuxRE). Formation of heterodimers with ARF proteins may alter their ability to modulate early auxin response genes expression. The sequence is that of Auxin-responsive protein IAA17 (IAA17) from Arabidopsis thaliana (Mouse-ear cress).